A 486-amino-acid chain; its full sequence is Protein nucleotidyltransferase YdiU (486 aa).

G90, G92, R93, K113, D125, G126, R176, and R183 together coordinate ATP. The active-site Proton acceptor is D252. 2 residues coordinate Mg(2+): N253 and D262. D262 contacts ATP.

It belongs to the SELO family. Requires Mg(2+) as cofactor. Mn(2+) is required as a cofactor.

The catalysed reaction is L-seryl-[protein] + ATP = 3-O-(5'-adenylyl)-L-seryl-[protein] + diphosphate. It catalyses the reaction L-threonyl-[protein] + ATP = 3-O-(5'-adenylyl)-L-threonyl-[protein] + diphosphate. The enzyme catalyses L-tyrosyl-[protein] + ATP = O-(5'-adenylyl)-L-tyrosyl-[protein] + diphosphate. It carries out the reaction L-histidyl-[protein] + UTP = N(tele)-(5'-uridylyl)-L-histidyl-[protein] + diphosphate. The catalysed reaction is L-seryl-[protein] + UTP = O-(5'-uridylyl)-L-seryl-[protein] + diphosphate. It catalyses the reaction L-tyrosyl-[protein] + UTP = O-(5'-uridylyl)-L-tyrosyl-[protein] + diphosphate. Functionally, nucleotidyltransferase involved in the post-translational modification of proteins. It can catalyze the addition of adenosine monophosphate (AMP) or uridine monophosphate (UMP) to a protein, resulting in modifications known as AMPylation and UMPylation. The protein is Protein nucleotidyltransferase YdiU of Pseudomonas putida (strain ATCC 700007 / DSM 6899 / JCM 31910 / BCRC 17059 / LMG 24140 / F1).